Consider the following 483-residue polypeptide: Ribulose bisphosphate carboxylase large chain (483 aa).

Positions 1–2 (MS) are excised as a propeptide. Substrate-binding residues include Asn-123 and Thr-173. Lys-175 acts as the Proton acceptor in catalysis. Lys-177 contacts substrate. 3 residues coordinate Mg(2+): Lys-201, Asp-203, and Glu-204. Lys-201 carries the post-translational modification N6-carboxylysine. Ser-208 carries the post-translational modification Phosphoserine. His-294 functions as the Proton acceptor in the catalytic mechanism. Substrate-binding residues include Arg-295 and His-327. Phosphothreonine is present on Thr-330. Ser-379 contacts substrate.

This sequence belongs to the RuBisCO large chain family. Type I subfamily. As to quaternary structure, heterohexadecamer of 8 large chains and 8 small chains; disulfide-linked. The disulfide link is formed within the large subunit homodimers. Mg(2+) serves as cofactor. In terms of processing, the disulfide bond which can form in the large chain dimeric partners within the hexadecamer appears to be associated with oxidative stress and protein turnover.

Its subcellular location is the plastid. The protein resides in the chloroplast. The catalysed reaction is 2 (2R)-3-phosphoglycerate + 2 H(+) = D-ribulose 1,5-bisphosphate + CO2 + H2O. The enzyme catalyses D-ribulose 1,5-bisphosphate + O2 = 2-phosphoglycolate + (2R)-3-phosphoglycerate + 2 H(+). Its function is as follows. RuBisCO catalyzes two reactions: the carboxylation of D-ribulose 1,5-bisphosphate, the primary event in carbon dioxide fixation, as well as the oxidative fragmentation of the pentose substrate in the photorespiration process. Both reactions occur simultaneously and in competition at the same active site. The chain is Ribulose bisphosphate carboxylase large chain from Aethionema cordifolium (Lebanon stonecress).